We begin with the raw amino-acid sequence, 667 residues long: Probable E3 ubiquitin-protein ligase HIP1 (667 aa).

Disordered stretches follow at residues 142–163 (NGAS…NGQA) and 285–311 (TTAG…RSFR). The segment covering 288–309 (GLSSSSYDPSGGNNNSGGSQRS) has biased composition (low complexity). The segment at 620–661 (CCICQEEYVDGDDLGTLDCGHDFHVGCVRQWLVVKNTCPICK) adopts an RING-type; atypical zinc-finger fold.

It belongs to the RING-type zinc finger family. As to quaternary structure, interacts with HAL3.

It catalyses the reaction S-ubiquitinyl-[E2 ubiquitin-conjugating enzyme]-L-cysteine + [acceptor protein]-L-lysine = [E2 ubiquitin-conjugating enzyme]-L-cysteine + N(6)-ubiquitinyl-[acceptor protein]-L-lysine.. Its pathway is protein modification; protein ubiquitination. Probable E3 ubiquitin-protein ligase that functions downstream of HAL3 and is required for HAL3-regulated plant growth. Activation of HIP1 by HAL3 may lead to the degradation of cell cycle suppressors, resulting in enhancement of cell division and plant growth. This chain is Probable E3 ubiquitin-protein ligase HIP1 (HIP1), found in Oryza sativa subsp. japonica (Rice).